A 336-amino-acid polypeptide reads, in one-letter code: Mitochondrial import receptor subunit TOM40 homolog (336 aa).

The tract at residues Met1 to Phe58 is disordered. Over residues Pro10–Pro21 the composition is skewed to pro residues. The segment covering Pro42–Leu52 has biased composition (basic and acidic residues).

Belongs to the Tom40 family. In terms of assembly, forms part of the preprotein translocase complex of the outer mitochondrial membrane (TOM complex). Interacts with mitochondrial targeting sequences.

It is found in the mitochondrion outer membrane. Functionally, channel-forming protein essential for import of protein precursors into mitochondria. In Xenopus tropicalis (Western clawed frog), this protein is Mitochondrial import receptor subunit TOM40 homolog (tomm40).